A 209-amino-acid chain; its full sequence is Octanoyltransferase (209 aa).

Residues 30–209 (DHEPEIIYLV…IQTEFNKIFK (180 aa)) enclose the BPL/LPL catalytic domain. Substrate is bound by residues 69–76 (RGGKFTFH), 143–145 (AIG), and 156–158 (GVA). The active-site Acyl-thioester intermediate is Cys-174.

Belongs to the LipB family.

It localises to the cytoplasm. It catalyses the reaction octanoyl-[ACP] + L-lysyl-[protein] = N(6)-octanoyl-L-lysyl-[protein] + holo-[ACP] + H(+). The protein operates within protein modification; protein lipoylation via endogenous pathway; protein N(6)-(lipoyl)lysine from octanoyl-[acyl-carrier-protein]: step 1/2. Functionally, catalyzes the transfer of endogenously produced octanoic acid from octanoyl-acyl-carrier-protein onto the lipoyl domains of lipoate-dependent enzymes. Lipoyl-ACP can also act as a substrate although octanoyl-ACP is likely to be the physiological substrate. This Rickettsia rickettsii (strain Iowa) protein is Octanoyltransferase.